The primary structure comprises 206 residues: CASP-like protein 2C1 (206 aa).

Over 1-31 (MSVLGVGPRTVTPHLRKGMMESSSGISLARA) the chain is Cytoplasmic. Residues 32-52 (EAFLRLFAILVLVLTACLLGF) traverse the membrane as a helical segment. Residues 53–71 (DTQTKLLFSTIKKTATFRD) are Extracellular-facing. The chain crosses the membrane as a helical span at residues 72–92 (LGALQVVVYVDSVAAGYNLLQ). Residues 93-111 (LGRGFISAKLKGKLINVSY) are Cytoplasmic-facing. The helical transmembrane segment at 112–132 (VTLPWVCFLLDQAAVYTVFSA) threads the bilayer. The Extracellular portion of the chain corresponds to 133-161 (NTAALQASIIAVTGESSLQWMKVCNRYTR). Residues 162–182 (FCIQVGGALLSGYLASLLMVL) traverse the membrane as a helical segment. Over 183-206 (LSSLSAFSLFRLYSPKQFHLLKPT) the chain is Cytoplasmic.

This sequence belongs to the Casparian strip membrane proteins (CASP) family. Homodimer and heterodimers.

The protein resides in the cell membrane. This is CASP-like protein 2C1 from Vitis vinifera (Grape).